An 82-amino-acid polypeptide reads, in one-letter code: Small ribosomal subunit protein uS17 (82 aa).

Belongs to the universal ribosomal protein uS17 family. As to quaternary structure, part of the 30S ribosomal subunit.

One of the primary rRNA binding proteins, it binds specifically to the 5'-end of 16S ribosomal RNA. The protein is Small ribosomal subunit protein uS17 of Thermosynechococcus vestitus (strain NIES-2133 / IAM M-273 / BP-1).